Here is a 228-residue protein sequence, read N- to C-terminus: Chaperone protein FanE (228 aa).

An N-terminal signal peptide occupies residues 1-19 (MNKFISIIALCVFSSYANA). Cysteine 157 and cysteine 198 are joined by a disulfide.

The protein belongs to the periplasmic pilus chaperone family.

It is found in the periplasm. Its function is as follows. Mediates assembly of pili by forming soluble multimeric complexes with pili subunits as an intermediate step in the assembly process. This protein is involved in K99 pili assembly. The polypeptide is Chaperone protein FanE (fanE) (Escherichia coli).